The sequence spans 153 residues: MVKIHDGASQLGANVAAPRSPEEATLERVANPHEEALYLARFTAPEFTSLCPVTGQPDFALLVIDYAPDKWIVESKSLKLYLGSFRNRGAFHEDCTVRIGKDLVAVLAPRWLRIGGYWYPRGGMPIDVFWSTGAPPPGLWLPDQGVPPYRGRG.

The interval 1-26 (MVKIHDGASQLGANVAAPRSPEEATL) is disordered. The Thioimide intermediate role is filled by Cys-51. Asp-58 (proton donor) is an active-site residue. Substrate is bound by residues 73 to 75 (VES) and 92 to 93 (HE).

Belongs to the GTP cyclohydrolase I family. QueF type 1 subfamily.

It is found in the cytoplasm. It carries out the reaction 7-aminomethyl-7-carbaguanine + 2 NADP(+) = 7-cyano-7-deazaguanine + 2 NADPH + 3 H(+). The protein operates within tRNA modification; tRNA-queuosine biosynthesis. Functionally, catalyzes the NADPH-dependent reduction of 7-cyano-7-deazaguanine (preQ0) to 7-aminomethyl-7-deazaguanine (preQ1). In Methylocella silvestris (strain DSM 15510 / CIP 108128 / LMG 27833 / NCIMB 13906 / BL2), this protein is NADPH-dependent 7-cyano-7-deazaguanine reductase.